Reading from the N-terminus, the 333-residue chain is uncharacterized protein (333 aa).

The stretch at 94–122 forms a coiled coil; it reads NLYREVWRELEEEQNKVEKLREYILKLDS.

This is an uncharacterized protein from Aquifex aeolicus (strain VF5).